We begin with the raw amino-acid sequence, 480 residues long: Probable serine/threonine-protein phosphatase 2A regulatory subunit B'' subunit TON2 (480 aa).

EF-hand domains follow at residues V186–N221, T294–E329, and D369–K404. Ca(2+) is bound by residues D307, D309, S311, S313, and E318.

In terms of assembly, interacts with PP2AA1. Widely expressed.

It localises to the cytoplasm. The protein localises to the cytoskeleton. In terms of biological role, probable regulatory subunit of type 2A protein phosphatase involved in the control of the dynamic organization of the cortical cytoskeleton. Plays an important role in the organization of interphase microtubule arrays in part through the regulation of nucleation geometry. Required for the reorganization of cortical arrays in response to light. This is Probable serine/threonine-protein phosphatase 2A regulatory subunit B'' subunit TON2 (TON2) from Arabidopsis thaliana (Mouse-ear cress).